Here is a 199-residue protein sequence, read N- to C-terminus: Superoxide dismutase [Mn/Fe] (199 aa).

4 residues coordinate Fe(3+): His27, His81, Asp161, and His165. Mn(2+) contacts are provided by His27, His81, Asp161, and His165.

It belongs to the iron/manganese superoxide dismutase family. In terms of assembly, homodimer. The cofactor is Mn(2+). It depends on Fe(3+) as a cofactor.

The catalysed reaction is 2 superoxide + 2 H(+) = H2O2 + O2. In terms of biological role, destroys superoxide anion radicals which are normally produced within the cells and which are toxic to biological systems. Catalyzes the dismutation of superoxide anion radicals into O2 and H2O2 by successive reduction and oxidation of the transition metal ion at the active site. In Staphylococcus epidermidis (strain ATCC 35984 / DSM 28319 / BCRC 17069 / CCUG 31568 / BM 3577 / RP62A), this protein is Superoxide dismutase [Mn/Fe] (sodA).